We begin with the raw amino-acid sequence, 177 residues long: ATP synthase subunit delta (177 aa).

It belongs to the ATPase delta chain family. In terms of assembly, F-type ATPases have 2 components, F(1) - the catalytic core - and F(0) - the membrane proton channel. F(1) has five subunits: alpha(3), beta(3), gamma(1), delta(1), epsilon(1). F(0) has three main subunits: a(1), b(2) and c(10-14). The alpha and beta chains form an alternating ring which encloses part of the gamma chain. F(1) is attached to F(0) by a central stalk formed by the gamma and epsilon chains, while a peripheral stalk is formed by the delta and b chains.

It localises to the cell inner membrane. Functionally, f(1)F(0) ATP synthase produces ATP from ADP in the presence of a proton or sodium gradient. F-type ATPases consist of two structural domains, F(1) containing the extramembraneous catalytic core and F(0) containing the membrane proton channel, linked together by a central stalk and a peripheral stalk. During catalysis, ATP synthesis in the catalytic domain of F(1) is coupled via a rotary mechanism of the central stalk subunits to proton translocation. Its function is as follows. This protein is part of the stalk that links CF(0) to CF(1). It either transmits conformational changes from CF(0) to CF(1) or is implicated in proton conduction. The protein is ATP synthase subunit delta of Haemophilus influenzae (strain PittGG).